Here is a 237-residue protein sequence, read N- to C-terminus: Ribonuclease PH (237 aa).

Residues arginine 86 and 124–126 (GTR) each bind phosphate.

The protein belongs to the RNase PH family. As to quaternary structure, homohexameric ring arranged as a trimer of dimers.

It catalyses the reaction tRNA(n+1) + phosphate = tRNA(n) + a ribonucleoside 5'-diphosphate. Phosphorolytic 3'-5' exoribonuclease that plays an important role in tRNA 3'-end maturation. Removes nucleotide residues following the 3'-CCA terminus of tRNAs; can also add nucleotides to the ends of RNA molecules by using nucleoside diphosphates as substrates, but this may not be physiologically important. Probably plays a role in initiation of 16S rRNA degradation (leading to ribosome degradation) during starvation. In Pseudoalteromonas translucida (strain TAC 125), this protein is Ribonuclease PH.